Here is a 37-residue protein sequence, read N- to C-terminus: Large ribosomal subunit protein bL36 (37 aa).

It belongs to the bacterial ribosomal protein bL36 family.

The polypeptide is Large ribosomal subunit protein bL36 (Alkaliphilus oremlandii (strain OhILAs) (Clostridium oremlandii (strain OhILAs))).